We begin with the raw amino-acid sequence, 231 residues long: MVQKIGILGAMREEITPILELFGVDFEEIPLGGNVFHKGVYHNKEIIVAYSKIGKVHSTLTTTSMILAFGVQKVLFSGVAGSLVKDLKINDLLVAIQLVQHDVDLSAFDHPLGFIPESAIFIETSESLNALAKEVANEQHIVLKEGVIASGDQFVHSKERKEFLVSEFKASAVEMEGASVAFVCQKFGVPCCVLRSISDNADEEANMSFDAFLEKSAQTSAKFLKSMVDEL.

E14 functions as the Proton acceptor in the catalytic mechanism. Substrate contacts are provided by residues G81, V155, and 175-176; that span reads ME. D199 (proton donor) is an active-site residue.

This sequence belongs to the PNP/UDP phosphorylase family. As to quaternary structure, homodimer.

The enzyme catalyses 6-amino-6-deoxyfutalosine + H2O = dehypoxanthine futalosine + adenine. The catalysed reaction is S-adenosyl-L-homocysteine + H2O = S-(5-deoxy-D-ribos-5-yl)-L-homocysteine + adenine. It catalyses the reaction S-methyl-5'-thioadenosine + H2O = 5-(methylsulfanyl)-D-ribose + adenine. It carries out the reaction 5'-deoxyadenosine + H2O = 5-deoxy-D-ribose + adenine. It functions in the pathway quinol/quinone metabolism; menaquinone biosynthesis. It participates in amino-acid biosynthesis; L-methionine biosynthesis via salvage pathway; S-methyl-5-thio-alpha-D-ribose 1-phosphate from S-methyl-5'-thioadenosine (hydrolase route): step 1/2. In terms of biological role, catalyzes the direct conversion of aminodeoxyfutalosine (AFL) into dehypoxanthine futalosine (DHFL) and adenine via the hydrolysis of the N-glycosidic bond; this reaction seems to represent an essential step in the menaquinone biosynthesis pathway in Helicobacter species. Can also probably catalyzes the hydrolysis of 5'-methylthioadenosine (MTA) and S-adenosylhomocysteine (SAH) to adenine and the corresponding thioribose, 5'-methylthioribose and S-ribosylhomocysteine, respectively. These other activities highlight the tremendous versatility of the enzyme, which also plays key roles in S-adenosylmethionine recycling and in the biosynthesis of the quorum-sensing molecule autoinducer-2. Does not act on futalosine (FL) as substrate. The sequence is that of Aminodeoxyfutalosine nucleosidase (mtnN) from Helicobacter pylori (strain ATCC 700392 / 26695) (Campylobacter pylori).